The following is an 820-amino-acid chain: MNESYQPTLIEQLAQEYWEENETFEVKEDLSREKFYCLSMLPYPSGDLHMGHVRNYTIGDVIARYQIHKGRNVLQPMGWDAFGLPAENAAIQRELPPAEWTRKNIKKMRKQLKQLGFAYDWSREITTCDSTYYRWEQWLFLQLYKKGLAYKKNAIVNWDPVDQTVLANEQIVDGRGWRSGAVVERREISQWFLKITDYSEELLKDLDELKEWPEQVITMQRNWIGQSQGVIINFNLEKGPDKLQVYTTRPDTLMGVTYLAIAPEHPLAKERAKKSKKIAAFLKKCKQTRVAEADIATQEKEGIDSGLFAVHPLSKEKLPIWIANFVLMEYASGVVMAVPAHDERDHEFALKYDLPLKPVIEPADGHDWDYNQAAYTNPGKLINSGSFNDIDSKTAFNVIADYLKNNGAGSRQTHYRLRDWGISRQRYWGTPIPIIYCKTCGTVPVPENQLPVLLPEDIIPTGHGSPLKETASFYKTRCPVCNKPATRETDTMDTFVESSWYYARYSCPDQDKVMLDDRAKYWTPVDQYIGGIEHAVMHLLYARFMHKILRDLGLLNSNEPFIRLLTQGMVLKDGAKMSKSKGNVVTPQSLIKKYGADTVRLFIIFAAPPEQDLEWSDSGVEGAYRFLKKLWGFSYRIKDALLAINQQKERSNYQWEAPEHRQTRQQIHECLQQANIDMERLQFNTVVSAVMKILNILIKLTTDNDAEAHLIREGTGILLRLLSPITPHISHHLWQSLGFGGDILDTPWPRPDPKALQTTELELIVQINGKLRGRIQVPTEASKEIIESTALNQENVQRHLADKKIKKVIVVPKKLINIVV.

The short motif at Pro42 to His52 is the 'HIGH' region element. The short motif at Lys576 to Ser580 is the 'KMSKS' region element. Lys579 is an ATP binding site.

It belongs to the class-I aminoacyl-tRNA synthetase family.

The protein localises to the cytoplasm. It catalyses the reaction tRNA(Leu) + L-leucine + ATP = L-leucyl-tRNA(Leu) + AMP + diphosphate. This is Leucine--tRNA ligase from Coxiella burnetii (strain RSA 493 / Nine Mile phase I).